A 220-amino-acid chain; its full sequence is Deoxyribose-phosphate aldolase (220 aa).

D92 functions as the Proton donor/acceptor in the catalytic mechanism. The active-site Schiff-base intermediate with acetaldehyde is the K157. The active-site Proton donor/acceptor is the K186.

The protein belongs to the DeoC/FbaB aldolase family. DeoC type 1 subfamily.

Its subcellular location is the cytoplasm. The catalysed reaction is 2-deoxy-D-ribose 5-phosphate = D-glyceraldehyde 3-phosphate + acetaldehyde. It participates in carbohydrate degradation; 2-deoxy-D-ribose 1-phosphate degradation; D-glyceraldehyde 3-phosphate and acetaldehyde from 2-deoxy-alpha-D-ribose 1-phosphate: step 2/2. In terms of biological role, catalyzes a reversible aldol reaction between acetaldehyde and D-glyceraldehyde 3-phosphate to generate 2-deoxy-D-ribose 5-phosphate. The chain is Deoxyribose-phosphate aldolase from Caldicellulosiruptor saccharolyticus (strain ATCC 43494 / DSM 8903 / Tp8T 6331).